Consider the following 1384-residue polypeptide: CHD3-type chromatin-remodeling factor PICKLE (1384 aa).

S23 carries the post-translational modification Phosphoserine. The segment at 49–96 (ENACQACGESTNLVSCNTCTYAFHAKCLVPPLKDASVENWRCPECVSP) adopts a PHD-type zinc-finger fold. 2 Chromo domains span residues 98–180 (NEID…NSED) and 190–249 (TTVD…RSKD). Residues 285–471 (RFSWSKQTHV…FMLMHFLDAG (187 aa)) form the Helicase ATP-binding domain. 298–305 (DEMGLGKT) is a binding site for ATP. A Nuclear localization signal motif is present at residues 376 to 383 (KKKKSGQI). Residues 422-425 (DEGH) carry the DEAH box motif. The Helicase C-terminal domain maps to 599-760 (LLDKMMVKLK…NINQEELDDI (162 aa)). Over residues 893 to 912 (AGLEDVSSDGDESYEAESTD) the composition is skewed to acidic residues. Disordered stretches follow at residues 893–941 (AGLE…TPLM), 1122–1152 (GLQG…NNNA), 1313–1344 (SDQS…PLRG), and 1365–1384 (VDVK…MVVD). Residues 1138–1152 (TNQNPGSVITGNNNA) show a composition bias toward polar residues. Basic and acidic residues-rich tracts occupy residues 1316–1341 (SKSH…ETKP) and 1367–1384 (VKME…MVVD).

The protein belongs to the SNF2/RAD54 helicase family. In terms of assembly, interacts with TAF12B. As to expression, mostly expressed in tissue undergoing significant differentiation (meristems and primordia) such as young seedlings, influorescent tissue and young siliques, but not in endosperm and seed coat (at protein level). Levels decrease as organs age. Also present in trichomes.

The protein localises to the nucleus. Its function is as follows. Chromatin remodeling factor that represses the expression of embryonic trait genes (such as NFYB9/LEC1) upon and after seed germination and thus enables the developmental switch to post-germinative growth. Silences some MADS-box proteins such as PHE1 and PHE2. Plays a role during carpel differentiation. Regulates late processes in cytokinin signaling. This chain is CHD3-type chromatin-remodeling factor PICKLE (PKL), found in Arabidopsis thaliana (Mouse-ear cress).